We begin with the raw amino-acid sequence, 333 residues long: MSEIGTRVYTECDADLSLIQNVLVAVIGYGSQGHAQALNLRDSGVNVVIGLKENSASRKSAQDSGFEVLLPQEAAKKAQLISLLVPDPAQRDVYESAIKHNLSEGDALLFSHGFNIRYGYITPPDGVDVLMVAPKGPGHMVRREYLDNRGTPAVFAIEKDASGRCFDLALSYAKGIGALRAGAIQTTFTEETETDLFGEQAVLCGGLEQLIQYGYETLVEAGYQPEVAYFEVLHELKLIIDLIVEGGLSKSRWSISDTAEYGSYVSGPRVIDKHVKENMKKILGEIRSGEFANRFIKDQDSGANEFTQLREIAARHPIEEVGARLRALFSWSK.

A KARI N-terminal Rossmann domain is found at 6 to 186 (TRVYTECDAD…GALRAGAIQT (181 aa)). NADP(+) contacts are provided by residues 29–32 (YGSQ), Lys-52, Ser-55, Ser-57, and 87–90 (DPAQ). His-112 is a catalytic residue. NADP(+) is bound at residue Gly-138. The KARI C-terminal knotted domain maps to 187-332 (TFTEETETDL…ARLRALFSWS (146 aa)). Asp-195, Glu-199, Glu-231, and Glu-235 together coordinate Mg(2+). Ser-256 provides a ligand contact to substrate.

The protein belongs to the ketol-acid reductoisomerase family. Requires Mg(2+) as cofactor.

The enzyme catalyses (2R)-2,3-dihydroxy-3-methylbutanoate + NADP(+) = (2S)-2-acetolactate + NADPH + H(+). The catalysed reaction is (2R,3R)-2,3-dihydroxy-3-methylpentanoate + NADP(+) = (S)-2-ethyl-2-hydroxy-3-oxobutanoate + NADPH + H(+). Its pathway is amino-acid biosynthesis; L-isoleucine biosynthesis; L-isoleucine from 2-oxobutanoate: step 2/4. The protein operates within amino-acid biosynthesis; L-valine biosynthesis; L-valine from pyruvate: step 2/4. Involved in the biosynthesis of branched-chain amino acids (BCAA). Catalyzes an alkyl-migration followed by a ketol-acid reduction of (S)-2-acetolactate (S2AL) to yield (R)-2,3-dihydroxy-isovalerate. In the isomerase reaction, S2AL is rearranged via a Mg-dependent methyl migration to produce 3-hydroxy-3-methyl-2-ketobutyrate (HMKB). In the reductase reaction, this 2-ketoacid undergoes a metal-dependent reduction by NADPH to yield (R)-2,3-dihydroxy-isovalerate. The chain is Ketol-acid reductoisomerase (NADP(+)) from Tropheryma whipplei (strain Twist) (Whipple's bacillus).